We begin with the raw amino-acid sequence, 331 residues long: DNA-directed RNA polymerase subunit alpha (331 aa).

Positions 1-242 (MEKFLRYNIQ…EHYKPIVTEL (242 aa)) are alpha N-terminal domain (alpha-NTD). The segment at 258-331 (VSSSKSSLAI…RNLKLKEEQN (74 aa)) is alpha C-terminal domain (alpha-CTD).

The protein belongs to the RNA polymerase alpha chain family. Homodimer. The RNAP catalytic core consists of 2 alpha, 1 beta, 1 beta' and 1 omega subunit. When a sigma factor is associated with the core the holoenzyme is formed, which can initiate transcription.

The enzyme catalyses RNA(n) + a ribonucleoside 5'-triphosphate = RNA(n+1) + diphosphate. DNA-dependent RNA polymerase catalyzes the transcription of DNA into RNA using the four ribonucleoside triphosphates as substrates. The polypeptide is DNA-directed RNA polymerase subunit alpha (Malacoplasma penetrans (strain HF-2) (Mycoplasma penetrans)).